A 334-amino-acid polypeptide reads, in one-letter code: MKCTIPEQQKVILIDEIGGYDVIKYEDYPVPSISEEELLIKNKYTGVNYIESYFRKGIYPCEKPYVLGREASGTVVAKGKGVTNFEVGDQVAYISNSTFAQYSKISSQGPVMKLPKGTSDEELKLYAAGLLQVLTALSFTNEAYHVKKGDYVLLFAAAGGVGLILNQLLKMKGAHTIAVASTDEKLKIAKEYGAEYLINASKEDILRQVLKFTNGKGVDASFDSVGKDTFEISLAALKRKGVFVSFGNASGLIPPFSITRLSPKNITLVRPQLYGYIADPEEWKYYSDEFFGLVNSKKLNIKIYKTYPLRDYRTAAADIESRKTVGKLVLEIPQ.

Belongs to the zinc-containing alcohol dehydrogenase family. Quinone oxidoreductase subfamily.

It catalyses the reaction 2 a quinone + NADPH + H(+) = 2 a 1,4-benzosemiquinone + NADP(+). The sequence is that of Probable quinone oxidoreductase (ZTA1) from Saccharomyces cerevisiae (strain ATCC 204508 / S288c) (Baker's yeast).